The sequence spans 350 residues: Phosphotriesterase-related protein (350 aa).

A divalent metal cation contacts are provided by H22, H24, E169, H201, H230, and D298.

Belongs to the metallo-dependent hydrolases superfamily. Phosphotriesterase family. The cofactor is a divalent metal cation.

The sequence is that of Phosphotriesterase-related protein from Drosophila mojavensis (Fruit fly).